The chain runs to 343 residues: S-adenosylmethionine:tRNA ribosyltransferase-isomerase (343 aa).

The protein belongs to the QueA family. Monomer.

The protein localises to the cytoplasm. The enzyme catalyses 7-aminomethyl-7-carbaguanosine(34) in tRNA + S-adenosyl-L-methionine = epoxyqueuosine(34) in tRNA + adenine + L-methionine + 2 H(+). Its pathway is tRNA modification; tRNA-queuosine biosynthesis. Its function is as follows. Transfers and isomerizes the ribose moiety from AdoMet to the 7-aminomethyl group of 7-deazaguanine (preQ1-tRNA) to give epoxyqueuosine (oQ-tRNA). The protein is S-adenosylmethionine:tRNA ribosyltransferase-isomerase of Coxiella burnetii (strain Dugway 5J108-111).